A 540-amino-acid polypeptide reads, in one-letter code: uncharacterized protein (540 aa).

The signal sequence occupies residues 1–20 (MSVSYRGPRWSSFVHVSQHS).

This sequence belongs to the TP096X family.

This is an uncharacterized protein from Treponema pallidum (strain Nichols).